The sequence spans 263 residues: Tryptophan synthase alpha chain (263 aa).

Active-site proton acceptor residues include Glu-49 and Asp-60.

Belongs to the TrpA family. Tetramer of two alpha and two beta chains.

It catalyses the reaction (1S,2R)-1-C-(indol-3-yl)glycerol 3-phosphate + L-serine = D-glyceraldehyde 3-phosphate + L-tryptophan + H2O. It participates in amino-acid biosynthesis; L-tryptophan biosynthesis; L-tryptophan from chorismate: step 5/5. The alpha subunit is responsible for the aldol cleavage of indoleglycerol phosphate to indole and glyceraldehyde 3-phosphate. The sequence is that of Tryptophan synthase alpha chain from Clostridium kluyveri (strain NBRC 12016).